The primary structure comprises 127 residues: MNIPDNLRYTKDHEWLQLLDDGVTAVVGITDFAQSELGDIVFVETKPVGTKVAAHGAFGTVEAVKTVADLFAPVAGEIVEVNGALDDAAIVNSDPYNEGWIVKMKLDNAAEVESLLSPADYSALIGE.

Residues Thr24–Lys105 enclose the Lipoyl-binding domain. Position 65 is an N6-lipoyllysine (Lys65).

Belongs to the GcvH family. The glycine cleavage system is composed of four proteins: P, T, L and H. (R)-lipoate serves as cofactor.

In terms of biological role, the glycine cleavage system catalyzes the degradation of glycine. The H protein shuttles the methylamine group of glycine from the P protein to the T protein. In Chlorobaculum parvum (strain DSM 263 / NCIMB 8327) (Chlorobium vibrioforme subsp. thiosulfatophilum), this protein is Glycine cleavage system H protein.